Reading from the N-terminus, the 692-residue chain is MAREFSLPNTRNIGIMAHIDAGKTTTTERILFYTGRVHKIGEVHEGAATMDWMEQEQERGITITSAATTAQWNGHRINIIDTPGHVDFTVEVERSLRVLDGAVTVFDAKGGVEPQTETVWRQADRYGVPRMCYINKMDIMGANFDMCLGQIKSRLGANPVAIQYPIGAEDQFKGMVDLIEMKAIVYTDDLGKTSDSAEIPADLLARCEELRMAMVEAAAEQDEELMMKYLEGEELTNDEIRAALRKGTIDCKLTPVMCGSSYKNKGVQPMLDNVVAYLPSPVDIPAIKGTLPDTEDEVDRPADDNGPFSALAFKIMTDPYVGRLTFFRVYSGVLNSGSYVLNSTKGKRERVGRILQMHANHREEITTVYSGDIAAAVGLKDTTTGDTLCDEKAPVILESMDFPEPVISVAIEPKSKADQDKMGIGLSKLAEEDPTFRTRTDEETGQTIISGMGELHLEIIVDRLKREFKVESNVGAPQVAYRETFRNAAKVEGKFVRQSGGRGQYGHVWVEFAPLEAGQGFQFENKIVGGVVPREYIPAVQAGIEESMKNGVIAGFPLVDIKATIVDGSYHDVDSNEMAFKVAGSLALKEAAKKCGAVLLEPIMKVEVTMPEEYMGDVMGDLNSRRGRIEGMEARANAQVIRAMVPLSEMFGYSTILRSRTQGRGVYSMVIDHYEEVPKFIAEEIIKKSKGE.

One can recognise a tr-type G domain in the interval 8–282 (PNTRNIGIMA…NVVAYLPSPV (275 aa)). GTP contacts are provided by residues 17–24 (AHIDAGKT), 81–85 (DTPGH), and 135–138 (NKMD).

Belongs to the TRAFAC class translation factor GTPase superfamily. Classic translation factor GTPase family. EF-G/EF-2 subfamily.

Its subcellular location is the cytoplasm. Its function is as follows. Catalyzes the GTP-dependent ribosomal translocation step during translation elongation. During this step, the ribosome changes from the pre-translocational (PRE) to the post-translocational (POST) state as the newly formed A-site-bound peptidyl-tRNA and P-site-bound deacylated tRNA move to the P and E sites, respectively. Catalyzes the coordinated movement of the two tRNA molecules, the mRNA and conformational changes in the ribosome. This is Elongation factor G from Brevibacillus brevis (strain 47 / JCM 6285 / NBRC 100599).